Reading from the N-terminus, the 153-residue chain is 3-hydroxyacyl-[acyl-carrier-protein] dehydratase FabZ (153 aa).

Residue histidine 52 is part of the active site.

It belongs to the thioester dehydratase family. FabZ subfamily.

The protein localises to the cytoplasm. It catalyses the reaction a (3R)-hydroxyacyl-[ACP] = a (2E)-enoyl-[ACP] + H2O. Its function is as follows. Involved in unsaturated fatty acids biosynthesis. Catalyzes the dehydration of short chain beta-hydroxyacyl-ACPs and long chain saturated and unsaturated beta-hydroxyacyl-ACPs. The protein is 3-hydroxyacyl-[acyl-carrier-protein] dehydratase FabZ of Magnetococcus marinus (strain ATCC BAA-1437 / JCM 17883 / MC-1).